The primary structure comprises 328 residues: E3 ubiquitin-protein ligase SINA-like 5 (328 aa).

Residues 1–77 are disordered; the sequence is MARSGGNDGH…GSPKSSQPVK (77 aa). Acidic residues-rich tracts occupy residues 10–20 and 27–62; these read HEEELDPELFE and GYEDGEFEEDEEEFEEEEEELEEEEDEEEEEEENVT. Positions 63–77 are enriched in polar residues; the sequence is TDEQSGSPKSSQPVK. The RING-type; degenerate zinc-finger motif lies at 86 to 122; the sequence is CPTCCEPLKRPIYQCSNGHLACSSCCQKLNKKCSFCR. Residues 136-324 form an SBD region; sequence VIEASIVPCP…MQICIAYGYK (189 aa). The SIAH-type; degenerate zinc-finger motif lies at 139-197; the sequence is ASIVPCPNAKHGCKETTTYCNQSSHEKVCKFVRCSCPVSNCNYVSSYSNLKSHACSTAH. Zn(2+) is bound by residues Cys-144, Cys-151, His-163, Cys-167, Cys-174, Cys-179, His-191, and His-197.

The protein belongs to the SINA (Seven in absentia) family.

It catalyses the reaction S-ubiquitinyl-[E2 ubiquitin-conjugating enzyme]-L-cysteine + [acceptor protein]-L-lysine = [E2 ubiquitin-conjugating enzyme]-L-cysteine + N(6)-ubiquitinyl-[acceptor protein]-L-lysine.. Its pathway is protein modification; protein ubiquitination. Functionally, E3 ubiquitin-protein ligase that mediates ubiquitination and subsequent proteasomal degradation of target proteins. E3 ubiquitin ligases accept ubiquitin from an E2 ubiquitin-conjugating enzyme in the form of a thioester and then directly transfers the ubiquitin to targeted substrates. It probably triggers the ubiquitin-mediated degradation of different substrates. The polypeptide is E3 ubiquitin-protein ligase SINA-like 5 (Arabidopsis thaliana (Mouse-ear cress)).